The sequence spans 431 residues: Urokinase-type plasminogen activator (431 aa).

The signal sequence occupies residues 1-20; it reads MRALLARLLLCVLVVSDSKG. The EGF-like domain occupies 27–63; it reads VPSNCDCLNGGTCVSNKYFSNIHWCNCPKKFGGQHCE. 6 cysteine pairs are disulfide-bonded: Cys31/Cys39, Cys33/Cys51, Cys53/Cys62, Cys70/Cys151, Cys91/Cys133, and Cys122/Cys146. The interval 34–57 is binds urokinase plasminogen activator surface receptor; the sequence is LNGGTCVSNKYFSNIHWCNCPKKF. The Kringle domain occupies 69–151; that stretch reads TCYEGNGHFY…LVQECMVHDC (83 aa). The connecting peptide stretch occupies residues 152–178; it reads ADGKKPSSPPEELKFQCGQKTLRPRFK. Position 158 is a phosphoserine (Ser158). Cystine bridges form between Cys168-Cys299, Cys209-Cys225, Cys217-Cys288, Cys313-Cys382, Cys345-Cys361, and Cys372-Cys400. The region spanning 179–424 is the Peptidase S1 domain; sequence IVGGEFTTIE…FLPWIRSHTK (246 aa). Catalysis depends on charge relay system residues His224 and Asp275. N-linked (GlcNAc...) asparagine glycosylation occurs at Asn322. Phosphoserine is present on Ser323. The Charge relay system role is filled by Ser376.

It belongs to the peptidase S1 family. In terms of assembly, found in high and low molecular mass forms. Each consists of two chains, A and B. The high molecular mass form contains a long chain A which is cleaved to yield a short chain A. Forms heterodimer with SERPINA5. Binds LRP1B; binding is followed by internalization and degradation. Interacts with MRC2. Interacts with PLAUR. In complex with SERPINE1, interacts with PLAUR/uPAR. Interacts with SORL1 and LRP1, either alone or in complex with SERPINE1; these interactions are abolished in the presence of LRPAP1/RAP. The ternary complex composed of PLAUR-PLAU-PAI1 also interacts with SORLA. Post-translationally, phosphorylation of Ser-158 and Ser-323 abolishes proadhesive ability but does not interfere with receptor binding. Produced as an inactive single-chain protein (pro-uPA or sc-uPA), is processed into the active disulfide-linked two-chain form of PLAU/uPA by a proteolytic event mediated, at least, by TMPRSS4.

It is found in the secreted. It carries out the reaction Specific cleavage of Arg-|-Val bond in plasminogen to form plasmin.. Inhibited by SERPINA5. Inhibited by SERPINE1. Its function is as follows. Specifically cleaves the zymogen plasminogen to form the active enzyme plasmin. The polypeptide is Urokinase-type plasminogen activator (PLAU) (Pongo abelii (Sumatran orangutan)).